The sequence spans 460 residues: Cysteine--tRNA ligase (460 aa).

Cys-29 is a binding site for Zn(2+). The 'HIGH' region signature appears at 31-41 (ATPQSSPHIGH). Zn(2+)-binding residues include Cys-212, His-237, and Glu-241. The 'KMSKS' region motif lies at 268 to 272 (KMSKS). Residue Lys-271 coordinates ATP.

This sequence belongs to the class-I aminoacyl-tRNA synthetase family. In terms of assembly, monomer. Requires Zn(2+) as cofactor.

It is found in the cytoplasm. The enzyme catalyses tRNA(Cys) + L-cysteine + ATP = L-cysteinyl-tRNA(Cys) + AMP + diphosphate. This is Cysteine--tRNA ligase from Corynebacterium glutamicum (strain ATCC 13032 / DSM 20300 / JCM 1318 / BCRC 11384 / CCUG 27702 / LMG 3730 / NBRC 12168 / NCIMB 10025 / NRRL B-2784 / 534).